A 655-amino-acid chain; its full sequence is MGIFSIANQHIRFAVKLACAIVLALFVGFHFQLETPRWAVLTAAIVAAGPAFAAGGEPYSGAIRYRGMLRIIGTFIGCIAALTIIITMIRAPLLMILVCCIWAGFCTWISSLVRVENSYAWGLSGYTALIIVITIQAEPLLTPQFAVERCSEIVIGIVCAIMADLLFSPRSVKQEVDREVDGLLVAQYQLMQLCIKHGDSEEVDKAWGDLVRRTAALEGMRSNLNMESSRWGRANRRLKALNTLSLTLITQSCETYLIQNTHPELITDTFRELFETPVETAQDVHKQLKRMRRIIAWTGERETPVTLYTWAGAATRYLLLKRGVIGNAKISVTEEEVLQGEPVVKVESAERHHAMVNFWRTTLSCVLGTLFWLWTGWTSGSGAMVMIAVVTSLAMRLPNPRMVAIDFIYGTLAALPLGLLYFLVIIPNTQQSMLLLCLSLAVLGFFLGIEVQKRRLGSMGALASTINIIVLDNPMTFHFSQFLDSALGQIVGCMMAFIVILLVRDNSRDRTGRVLLNQFVSAAVSAMTTNVVRRKENHLPALYQQLFLLMNKFPGDLPKFRLALTMIIAHQRLRDAPIPVNHDLSAFHRQLRRTADHVISAGNDDKRRRYFGQLLDELDVYQEKLRVWEAPPRVTEPVKRLSGMLHKYQHALTDN.

11 helical membrane passes run Phe13–Leu33, Trp38–Pro58, Leu69–Ile89, Leu93–Val113, Trp121–Leu141, Glu152–Val172, Leu370–Val390, Phe407–Pro427, Gln431–Val451, Met459–Phe479, and Phe482–Leu502.

The protein belongs to the aromatic acid exporter ArAE (TC 2.A.85) family.

The protein localises to the cell inner membrane. Forms an efflux pump with AaeA. Could function as a metabolic relief valve, allowing to eliminate certain compounds when they accumulate to high levels in the cell. This chain is p-hydroxybenzoic acid efflux pump subunit AaeB, found in Citrobacter koseri (strain ATCC BAA-895 / CDC 4225-83 / SGSC4696).